The primary structure comprises 154 residues: Mating pheromone 2 (154 aa).

Positions 1–16 (MKAIFIILAILMVTQA) are cleaved as a signal peptide. Residues 17–52 (FKMTSKVNTKLQSQIQSKFQSKNKLASTFQTSSQLK) constitute a propeptide that is removed on maturation.

The protein resides in the secreted. Mating ciliate pheromones (or gamones) are diffusible extracellular communication signals that distinguish different intraspecific classes of cells commonly referred to as 'mating types'. They prepare the latter for conjugation by changing their cell surface properties. In Euplotoides octocarinatus (Freshwater ciliate), this protein is Mating pheromone 2.